The sequence spans 1281 residues: Dynactin subunit 1 (1281 aa).

The segment at 1 to 25 is disordered; that stretch reads MAQSKRHVYSRTPSGSRMSAEASAR. The CAP-Gly domain maps to 48–90; sequence GATLFATGKWVGVILDEAKGKNDGTVQGRKYFTCDEGHGIFVR. The disordered stretch occupies residues 99 to 225; sequence DGADTTSPET…EEEGLRAQVR (127 aa). Polar residues predominate over residues 102 to 114; it reads DTTSPETPDSSAS. Threonine 108, threonine 145, threonine 146, and threonine 147 each carry phosphothreonine. The span at 129-152 shows a compositional bias: basic residues; it reads SKLRGPKPKKAPTARKTTTRRPKP. Low complexity predominate over residues 161 to 205; the sequence is AGASSSLGPSGSASAGELSSSEPSTPAQTPLAAPIIPTPALTSPG. 2 positions are modified to phosphoserine: serine 179 and serine 212. The segment covering 214 to 225 has biased composition (basic and acidic residues); that stretch reads SKEEEGLRAQVR. Coiled-coil stretches lie at residues 217-540 and 952-1043; these read EEGL…QQEA and IKEL…QSKR. The interaction with HPS6 stretch occupies residues 911 to 1281; it reads EYDAERPPSK…LHQLHDRLIS (371 aa). The tract at residues 1065–1084 is disordered; the sequence is GEEQQRGGAPGQAPGIVPGP.

The protein belongs to the dynactin 150 kDa subunit family. In terms of assembly, monomer and homodimer. Subunit of dynactin, a multiprotein complex part of a tripartite complex with dynein and a adapter, such as BICDL1, BICD2 or HOOK3. The dynactin complex is built around ACTR1A/ACTB filament and consists of an actin-related filament composed of a shoulder domain, a pointed end and a barbed end. Its length is defined by its flexible shoulder domain. The soulder is composed of 2 DCTN1 subunits, 4 DCTN2 and 2 DCTN3. DCTN1/p150(glued) binds directly to microtubules and to cytoplasmic dynein. The 4 DCNT2 (via N-terminus) bind the ACTR1A filament and act as molecular rulers to determine the length. The pointed end is important for binding dynein-dynactin cargo adapters. Consists of 4 subunits: ACTR10, DCNT4, DCTN5 and DCTN6. The barbed end is composed of a CAPZA1:CAPZB heterodimers, which binds ACTR1A/ACTB filament and dynactin and stabilizes dynactin. Interacts with the C-terminus of MAPRE1, MAPRE2 and MAPRE3. Interacts (via C-terminus) with SNX6. Interacts with CLN3, DYNAP, ECPAS and FBXL5. Interacts with MISP; this interaction regulates its distribution at the cell cortex. Interacts with CEP131. Interacts with CEP126. Interacts with CLIP1. Interacts with dynein intermediate chain and dynein heavy chain. Interacts with PLK1 (via POLO-box domain). Interacts with TBCB. Binds preferentially to tyrosinated microtubules than to detyrosinated microtubules. Interacts with PARD6A. Interacts with HPS6. Interacts with KIF3A. Interacts with BICD2. Interacts with DST (isoform 9). Interacts with DST (isoform 1). Identified in a complex with MREG and RILP. Interacts with BCCIP (isoform 2/alpha). Interacts with DCDC1. Interacts with AKNA. Interacts with DYNC1I2. Interacts with RUFY3 and RUFY4. Post-translationally, ubiquitinated by a SCF complex containing FBXL5, leading to its degradation by the proteasome. In terms of processing, phosphorylation by SLK at Thr-145, Thr-146 and Thr-147 targets DCTN1 to the centrosome. It is uncertain if SLK phosphorylates all three threonines or one or two of them. PLK1-mediated phosphorylation at Ser-179 is essential for its localization in the nuclear envelope, promotes its dissociation from microtubules during early mitosis and positively regulates nuclear envelope breakdown during prophase.

The protein resides in the cytoplasm. Its subcellular location is the cytoskeleton. The protein localises to the microtubule organizing center. It is found in the centrosome. It localises to the centriole. The protein resides in the spindle. Its subcellular location is the nucleus envelope. The protein localises to the cell cortex. Part of the dynactin complex that activates the molecular motor dynein for ultra-processive transport along microtubules. Plays a key role in dynein-mediated retrograde transport of vesicles and organelles along microtubules by recruiting and tethering dynein to microtubules. Binds to both dynein and microtubules providing a link between specific cargos, microtubules and dynein. Essential for targeting dynein to microtubule plus ends, recruiting dynein to membranous cargos and enhancing dynein processivity (the ability to move along a microtubule for a long distance without falling off the track). Can also act as a brake to slow the dynein motor during motility along the microtubule. Can regulate microtubule stability by promoting microtubule formation, nucleation and polymerization and by inhibiting microtubule catastrophe in neurons. Inhibits microtubule catastrophe by binding both to microtubules and to tubulin, leading to enhanced microtubule stability along the axon. Plays a role in metaphase spindle orientation. Plays a role in centriole cohesion and subdistal appendage organization and function. Its recruitment to the centriole in a KIF3A-dependent manner is essential for the maintenance of centriole cohesion and the formation of subdistal appendage. Also required for microtubule anchoring at the mother centriole. Plays a role in primary cilia formation. The chain is Dynactin subunit 1 (DCTN1) from Sus scrofa (Pig).